Reading from the N-terminus, the 1346-residue chain is Proline-rich protein 36 (1346 aa).

Disordered stretches follow at residues 1–403 (MDNK…TQLI), 426–512 (SVSS…QATP), 537–606 (PLTT…PSPL), 633–679 (PRQT…VSPL), 711–1155 (LETQ…AELA), and 1168–1240 (PPLA…RSPK). The span at 10–26 (AGAAARTPAARAPGLLT) shows a compositional bias: low complexity. The segment covering 27–40 (PRPPGSPRPPPPVT) has biased composition (pro residues). Composition is skewed to low complexity over residues 41–55 (PAALRVLGAAGAVGR) and 86–97 (SSRNPASRPPAS). The segment covering 137–152 (SAEETVARGKATEAPK) has biased composition (basic and acidic residues). The segment covering 165–177 (SGPTPGTPSPAMA) has biased composition (low complexity). A compositionally biased stretch (pro residues) spans 191-203 (RPAPSARPRPPTE). Over residues 208–220 (SVSSASEHSTTEP) the composition is skewed to polar residues. 2 stretches are compositionally biased toward low complexity: residues 235–255 (QRPASRSLSSSATPLSSPARS) and 293–312 (APALGPLSSSPLATPSPSGT). Pro residues-rich tracts occupy residues 329 to 343 (ATLPPSPPVTPPPPA), 371 to 380 (PLAPPSPSAP), and 387 to 397 (PSPPATPPSQV). Residues 426–464 (SVSSPLQSMPPTQANPALPSLPTLLSPLATPPLSAMSPL) show a composition bias toward low complexity. A compositionally biased stretch (pro residues) spans 494–506 (TPPPQASPSPSPP). Residues 546-558 (PPLVSPSLLASPP) are compositionally biased toward low complexity. Over residues 559 to 578 (LQAPPHPQAPPSMTTPPMQA) the composition is skewed to pro residues. Residues 633 to 647 (PRQTQASLISPSRPA) show a composition bias toward polar residues. Residues 648-657 (STPPDSPPLQ) are compositionally biased toward pro residues. Residues 658 to 679 (APLSLPASPPLQTSLSPAVSPL) show a composition bias toward low complexity. The segment covering 724 to 733 (TPPASLTTPP) has biased composition (polar residues). 2 stretches are compositionally biased toward pro residues: residues 781–821 (ETPP…PALA) and 829–865 (PSPPLSPLATPPPQAPPALALPPLQAPPSPPASPPLS). Positions 866–875 (PLATPSPQAP) are enriched in low complexity. Pro residues-rich tracts occupy residues 887–917 (FSPPPSPPVQAPFSPPASPPVSPSATPPSQA), 926–997 (LQVP…PPAS), and 1004–1015 (AKPPPQAPPALA). Composition is skewed to low complexity over residues 1029–1046 (FPGQAPFSPSASLPMSPL), 1137–1146 (DSGPEGGAAA), and 1224–1239 (GKAAAGAGAGASSRSP). Position 1310 is a phosphoserine (serine 1310).

The protein is Proline-rich protein 36 of Homo sapiens (Human).